The following is a 130-amino-acid chain: MTYAIVATAGKQFRVEPGRFYDVDRMNVEPEQTVSLDQVLLVHDGDTIAVGQPLVEGATVEATVMQHLRGRKVIVYKMRPKKKTRKKQGHRQELTRLMINAIHLNGSSAKTAAQPAADEAVAANEVDSEA.

The interval 110 to 130 is disordered; the sequence is KTAAQPAADEAVAANEVDSEA. Over residues 112–130 the composition is skewed to low complexity; that stretch reads AAQPAADEAVAANEVDSEA.

Belongs to the bacterial ribosomal protein bL21 family. Part of the 50S ribosomal subunit. Contacts protein L20.

Functionally, this protein binds to 23S rRNA in the presence of protein L20. This Cyanothece sp. (strain PCC 7425 / ATCC 29141) protein is Large ribosomal subunit protein bL21.